The following is a 404-amino-acid chain: Probable tRNA sulfurtransferase (404 aa).

The THUMP domain maps to 60-165 (TAVAESLKQV…EEAAYLSYET (106 aa)). ATP is bound by residues 183 to 184 (ML), 208 to 209 (HF), Arg265, Gly287, and Gln296.

Belongs to the ThiI family.

It is found in the cytoplasm. The catalysed reaction is [ThiI sulfur-carrier protein]-S-sulfanyl-L-cysteine + a uridine in tRNA + 2 reduced [2Fe-2S]-[ferredoxin] + ATP + H(+) = [ThiI sulfur-carrier protein]-L-cysteine + a 4-thiouridine in tRNA + 2 oxidized [2Fe-2S]-[ferredoxin] + AMP + diphosphate. The enzyme catalyses [ThiS sulfur-carrier protein]-C-terminal Gly-Gly-AMP + S-sulfanyl-L-cysteinyl-[cysteine desulfurase] + AH2 = [ThiS sulfur-carrier protein]-C-terminal-Gly-aminoethanethioate + L-cysteinyl-[cysteine desulfurase] + A + AMP + 2 H(+). The protein operates within cofactor biosynthesis; thiamine diphosphate biosynthesis. Its function is as follows. Catalyzes the ATP-dependent transfer of a sulfur to tRNA to produce 4-thiouridine in position 8 of tRNAs, which functions as a near-UV photosensor. Also catalyzes the transfer of sulfur to the sulfur carrier protein ThiS, forming ThiS-thiocarboxylate. This is a step in the synthesis of thiazole, in the thiamine biosynthesis pathway. The sulfur is donated as persulfide by IscS. The polypeptide is Probable tRNA sulfurtransferase (Streptococcus pneumoniae (strain 70585)).